We begin with the raw amino-acid sequence, 906 residues long: Protein translocase subunit SecA (906 aa).

ATP contacts are provided by residues glutamine 87, 105-109, and aspartate 512; that span reads GEGKT. The disordered stretch occupies residues 875 to 897; sequence VTFVRDEQKVGRNDPCPCGSGKK. Residues cysteine 890, cysteine 892, cysteine 901, and histidine 902 each coordinate Zn(2+).

The protein belongs to the SecA family. As to quaternary structure, monomer and homodimer. Part of the essential Sec protein translocation apparatus which comprises SecA, SecYEG and auxiliary proteins SecDF-YajC and YidC. The cofactor is Zn(2+).

It is found in the cell inner membrane. It localises to the cytoplasm. It catalyses the reaction ATP + H2O + cellular proteinSide 1 = ADP + phosphate + cellular proteinSide 2.. Functionally, part of the Sec protein translocase complex. Interacts with the SecYEG preprotein conducting channel. Has a central role in coupling the hydrolysis of ATP to the transfer of proteins into and across the cell membrane, serving both as a receptor for the preprotein-SecB complex and as an ATP-driven molecular motor driving the stepwise translocation of polypeptide chains across the membrane. The polypeptide is Protein translocase subunit SecA (Aeromonas hydrophila subsp. hydrophila (strain ATCC 7966 / DSM 30187 / BCRC 13018 / CCUG 14551 / JCM 1027 / KCTC 2358 / NCIMB 9240 / NCTC 8049)).